A 211-amino-acid polypeptide reads, in one-letter code: Transcription factor bHLH150 (211 aa).

Positions 1 to 15 are enriched in polar residues; it reads MSSEQGNGSNPSTSP. A disordered region spans residues 1–23; the sequence is MSSEQGNGSNPSTSPEVEGTKTI. The 50-residue stretch at 135 to 184 folds into the bHLH domain; sequence AIRGSGGSGRRRKLSAVGNRVRVLGGLVPGCRRTALPELLDETADYIAAL.

As to quaternary structure, homodimer. Interacts with PRE3 and ASK7. In terms of processing, phosphorylated by ASK7.

It is found in the nucleus. Its function is as follows. Atypical bHLH transcription factor probably unable to bind DNA. Negatively regulates brassinosteroid signaling. This chain is Transcription factor bHLH150 (BHLH150), found in Arabidopsis thaliana (Mouse-ear cress).